The following is a 76-amino-acid chain: MIFKVFYQKDNTRSPRRETTDALYLDLDVATKEEGVILARELLAKNTAYHVEFIDSLSDESVEYEKETGVFEITSF.

It belongs to the RNA polymerase subunit epsilon family. In terms of assembly, RNAP is composed of a core of 2 alpha, a beta and a beta' subunit. The core is associated with a delta subunit, and at least one of epsilon or omega. When a sigma factor is associated with the core the holoenzyme is formed, which can initiate transcription.

It carries out the reaction RNA(n) + a ribonucleoside 5'-triphosphate = RNA(n+1) + diphosphate. Functionally, a non-essential component of RNA polymerase (RNAP). The polypeptide is DNA-directed RNA polymerase subunit epsilon (Lactococcus lactis subsp. cremoris (strain MG1363)).